We begin with the raw amino-acid sequence, 124 residues long: MTTVNQLVRNARPTKTFKSNVPALGACPQKRGVCVRVYTTTPKKPNSALRKVCRVRLTNGLEVTSYIGGEGHNLQEHASILIRGGRVKDLPGVRYHVVRGALDCAGVHSRKKSRSKYGTKQPKS.

Asp-89 is modified (3-methylthioaspartic acid).

The protein belongs to the universal ribosomal protein uS12 family. As to quaternary structure, part of the 30S ribosomal subunit. Contacts proteins S8 and S17. May interact with IF1 in the 30S initiation complex.

With S4 and S5 plays an important role in translational accuracy. In terms of biological role, interacts with and stabilizes bases of the 16S rRNA that are involved in tRNA selection in the A site and with the mRNA backbone. Located at the interface of the 30S and 50S subunits, it traverses the body of the 30S subunit contacting proteins on the other side and probably holding the rRNA structure together. The combined cluster of proteins S8, S12 and S17 appears to hold together the shoulder and platform of the 30S subunit. The sequence is that of Small ribosomal subunit protein uS12 from Blochmanniella pennsylvanica (strain BPEN).